A 668-amino-acid chain; its full sequence is Protein PLASTID TRANSCRIPTIONALLY ACTIVE 10 (668 aa).

A chloroplast-targeting transit peptide spans Met1–Arg40. Residues Gly272–Arg340 form the S1 motif domain. Positions Arg362–Glu391 are enriched in basic and acidic residues. The disordered stretch occupies residues Arg362–Leu394. Ser434 carries the phosphoserine modification. The tract at residues Lys611–Asp668 is disordered. Positions Gln621–Asp641 are enriched in acidic residues. The span at Ser646–Asp668 shows a compositional bias: polar residues.

As to quaternary structure, component of the transcriptionally active chromosome (TAC) complexes. Interacts with PTAC7.

Its subcellular location is the plastid. The protein resides in the chloroplast. This chain is Protein PLASTID TRANSCRIPTIONALLY ACTIVE 10, found in Arabidopsis thaliana (Mouse-ear cress).